We begin with the raw amino-acid sequence, 476 residues long: Cytochrome c oxidase subunit 1 (476 aa).

Residues 19-39 (LYYLWFSFLFGIYGFLLSVIL) form a helical membrane-spanning segment. A Ca(2+)-binding site is contributed by E42. The next 8 helical transmembrane spans lie at 61–81 (MIFT…GLFG), 105–125 (ISLL…AAEF), 144–164 (LSPV…IASI), 194–214 (LIIT…GVLM), 240–260 (LLWF…FGII), 278–298 (MILA…HHMY), 309–329 (FFTS…FNWL), and 345–365 (LLSL…VILG). A Fe(II)-heme a-binding site is contributed by H66. Residue H246 participates in Cu cation binding. A cross-link (1'-histidyl-3'-tyrosine (His-Tyr)) is located at residues 246 to 250 (HPEVY). O2 is bound at residue Y250. Cu cation-binding residues include H295 and H296. Mg(2+) contacts are provided by H374 and D375. 2 helical membrane-spanning segments follow: residues 379-399 (VIAH…FTSV) and 415-435 (TIIV…FLPM). H382 lines the heme a3 pocket. H384 provides a ligand contact to Fe(II)-heme a. P448 contributes to the Ca(2+) binding site. The helical transmembrane segment at 455 to 475 (NGWNMICSIGSTMTLFGLLIF) threads the bilayer.

This sequence belongs to the heme-copper respiratory oxidase family. Component of the cytochrome c oxidase (complex IV, CIV), a multisubunit enzyme composed of a catalytic core of 3 subunits and several supernumerary subunits. The complex exists as a monomer or a dimer and forms supercomplexes (SCs) in the inner mitochondrial membrane with ubiquinol-cytochrome c oxidoreductase (cytochrome b-c1 complex, complex III, CIII). Heme serves as cofactor. Cu cation is required as a cofactor.

It localises to the mitochondrion inner membrane. The catalysed reaction is 4 Fe(II)-[cytochrome c] + O2 + 8 H(+)(in) = 4 Fe(III)-[cytochrome c] + 2 H2O + 4 H(+)(out). The protein operates within energy metabolism; oxidative phosphorylation. Functionally, component of the cytochrome c oxidase, the last enzyme in the mitochondrial electron transport chain which drives oxidative phosphorylation. The respiratory chain contains 3 multisubunit complexes succinate dehydrogenase (complex II, CII), ubiquinol-cytochrome c oxidoreductase (cytochrome b-c1 complex, complex III, CIII) and cytochrome c oxidase (complex IV, CIV), that cooperate to transfer electrons derived from NADH and succinate to molecular oxygen, creating an electrochemical gradient over the inner membrane that drives transmembrane transport and the ATP synthase. Cytochrome c oxidase is the component of the respiratory chain that catalyzes the reduction of oxygen to water. Electrons originating from reduced cytochrome c in the intermembrane space (IMS) are transferred via the dinuclear copper A center (CU(A)) of subunit 2 and heme A of subunit 1 to the active site in subunit 1, a binuclear center (BNC) formed by heme A3 and copper B (CU(B)). The BNC reduces molecular oxygen to 2 water molecules using 4 electrons from cytochrome c in the IMS and 4 protons from the mitochondrial matrix. The polypeptide is Cytochrome c oxidase subunit 1 (COI) (Plasmodium chabaudi).